The primary structure comprises 152 residues: UPF0266 membrane protein YobD (152 aa).

3 helical membrane passes run Leu-6–Met-26, Ile-45–His-65, and Ala-67–Ile-87.

The protein belongs to the UPF0266 family.

It localises to the cell inner membrane. This Escherichia coli O157:H7 (strain EC4115 / EHEC) protein is UPF0266 membrane protein YobD.